The primary structure comprises 253 residues: Methionine aminopeptidase A (253 aa).

H80 contributes to the substrate binding site. A divalent metal cation is bound by residues D98, D109, and H172. H179 serves as a coordination point for substrate. E205 and E236 together coordinate a divalent metal cation.

Belongs to the peptidase M24A family. Methionine aminopeptidase type 1 subfamily. In terms of assembly, monomer. Co(2+) serves as cofactor. It depends on Zn(2+) as a cofactor. The cofactor is Mn(2+). Requires Fe(2+) as cofactor.

It carries out the reaction Release of N-terminal amino acids, preferentially methionine, from peptides and arylamides.. Functionally, removes the N-terminal methionine from nascent proteins. The N-terminal methionine is often cleaved when the second residue in the primary sequence is small and uncharged (Met-Ala-, Cys, Gly, Pro, Ser, Thr, or Val). Requires deformylation of the N(alpha)-formylated initiator methionine before it can be hydrolyzed. The polypeptide is Methionine aminopeptidase A (Synechocystis sp. (strain ATCC 27184 / PCC 6803 / Kazusa)).